A 1585-amino-acid chain; its full sequence is Histone acetyltransferase lsy-12 (1585 aa).

2 disordered regions span residues Met1–Glu37 and Gly279–Val491. Residues Pro23 to Glu37 show a composition bias toward basic and acidic residues. The segment covering Gly279–Ser296 has biased composition (polar residues). Positions Thr302 to Arg312 are enriched in basic and acidic residues. Composition is skewed to polar residues over residues Leu355 to Val364 and Ser411 to Leu426. A compositionally biased stretch (low complexity) spans Ser431–Ser440. Residues Gln453–Lys469 show a composition bias toward basic residues. Positions Gln477–Val491 are enriched in acidic residues. The region spanning Glu544 to Pro830 is the MYST-type HAT domain. A C2HC MYST-type zinc finger spans residues Leu577–Leu602. Lys644 is subject to N6-acetyllysine; by autocatalysis. Position 685–689 (Ser685–Thr689) interacts with acetyl-CoA. Glu720 serves as the catalytic Proton donor/acceptor. Acetyl-CoA contacts are provided by Ser724 and Lys815. Composition is skewed to basic and acidic residues over residues Ser844–Arg855 and Val947–Glu956. 4 disordered regions span residues Ser844–Glu903, Glu927–Ser1262, Glu1286–His1373, and His1431–Gln1507. A compositionally biased stretch (polar residues) spans Asn977–Gly999. A compositionally biased stretch (acidic residues) spans Thr1011–Asp1022. A compositionally biased stretch (basic and acidic residues) spans Asp1029–Ser1046. Positions Arg1047 to Ala1060 are enriched in basic residues. Basic and acidic residues-rich tracts occupy residues Val1070–Asn1081 and Asp1135–Arg1151. Residues Pro1164 to Pro1173 show a composition bias toward low complexity. Positions Leu1185 to Gln1194 are enriched in polar residues. Positions Asn1196–Pro1207 are enriched in basic and acidic residues. Composition is skewed to polar residues over residues Ala1298–Pro1317 and His1324–Pro1333. The segment covering Gln1482–Gln1493 has biased composition (low complexity).

Belongs to the MYST (SAS/MOZ) family.

It carries out the reaction L-lysyl-[protein] + acetyl-CoA = N(6)-acetyl-L-lysyl-[protein] + CoA + H(+). Functionally, probable histone acetyltransferase. Required to initiate and then maintain lateralized gene expression in the ASE sensory neurons. Involved in determining cell fate in the ASE neurons. The sequence is that of Histone acetyltransferase lsy-12 from Caenorhabditis elegans.